Here is a 177-residue protein sequence, read N- to C-terminus: Shikimate kinase (177 aa).

17 to 22 (GAGKST) lines the ATP pocket. Residue serine 21 participates in Mg(2+) binding. Substrate contacts are provided by aspartate 39, arginine 63, and glycine 85. Arginine 123 contacts ATP. A substrate-binding site is contributed by arginine 142. Arginine 160 lines the ATP pocket.

The protein belongs to the shikimate kinase family. In terms of assembly, monomer. It depends on Mg(2+) as a cofactor.

It localises to the cytoplasm. The catalysed reaction is shikimate + ATP = 3-phosphoshikimate + ADP + H(+). It participates in metabolic intermediate biosynthesis; chorismate biosynthesis; chorismate from D-erythrose 4-phosphate and phosphoenolpyruvate: step 5/7. In terms of biological role, catalyzes the specific phosphorylation of the 3-hydroxyl group of shikimic acid using ATP as a cosubstrate. The chain is Shikimate kinase from Halorhodospira halophila (strain DSM 244 / SL1) (Ectothiorhodospira halophila (strain DSM 244 / SL1)).